Here is a 416-residue protein sequence, read N- to C-terminus: MAVTKLILFASALLLTALFIGVNASRSNETWHEHAVENPDEVAAMVDMSIRNSTERRRLGYFSCATGNPIDDCWRCDRKWQLRRKRLADCSIGFGRNAIGGRDGRFYVVTDPGDDDPVNPIPGTLRHAVIQDEPLWIIFKRDMVITLKQELIMNSFKTIDGRGVNVHIANGACLTIQYVTNIIVHGIHVHDCKPTGNAMVRSSPSHYGFRSMADGDAISIFGSSHIWIDHNSLSNCADGLVDAVMSSTAITVSNNFFTHHNEVMLLGHSDSYTRDKVMQVTIAYNHFGEGLIQRMPRCRHGYFHVVNNDYTHWEMYAIGGSAGPTINSQGNRFLAPVNPFAKEVTKREYTGESKWKHWNWRSEGDLFLNGAFFTRSGAGAGANYARASSLSAKSSSLVGTMTSYSGALNCRAGRRC.

A signal peptide spans 1 to 24 (MAVTKLILFASALLLTALFIGVNA). Residues Asn-23, Asn-28, and Asn-52 are each glycosylated (N-linked (GlcNAc...) asparagine). Asp-214, Asp-238, and Asp-242 together coordinate Ca(2+). The active site involves Arg-294.

Belongs to the polysaccharide lyase 1 family. Ca(2+) is required as a cofactor.

It carries out the reaction Eliminative cleavage of (1-&gt;4)-alpha-D-galacturonan to give oligosaccharides with 4-deoxy-alpha-D-galact-4-enuronosyl groups at their non-reducing ends.. The protein operates within glycan metabolism; pectin degradation; 2-dehydro-3-deoxy-D-gluconate from pectin: step 2/5. This Arabidopsis thaliana (Mouse-ear cress) protein is Probable pectate lyase 8.